Here is a 216-residue protein sequence, read N- to C-terminus: Urease accessory protein UreG (216 aa).

GTP is bound at residue 24–31 (GPVGSGKT).

The protein belongs to the SIMIBI class G3E GTPase family. UreG subfamily. As to quaternary structure, homodimer. UreD, UreF and UreG form a complex that acts as a GTP-hydrolysis-dependent molecular chaperone, activating the urease apoprotein by helping to assemble the nickel containing metallocenter of UreC. The UreE protein probably delivers the nickel.

The protein localises to the cytoplasm. Facilitates the functional incorporation of the urease nickel metallocenter. This process requires GTP hydrolysis, probably effectuated by UreG. In Variovorax paradoxus (strain S110), this protein is Urease accessory protein UreG.